Reading from the N-terminus, the 847-residue chain is Rho GTPase-activating protein 12 (847 aa).

Positions 12–74 (PGQAYIEVEY…PAQYVKEVTR (63 aa)) constitute an SH3 domain. The tract at residues 110 to 241 (LPELSSFGKP…PPNQGRPDSP (132 aa)) is disordered. 2 stretches are compositionally biased toward polar residues: residues 117-174 (GKPS…QNRT) and 191-200 (TSFSQEQSCD). A Phosphoserine modification is found at Ser-165. Phosphoserine is present on residues Ser-201, Ser-213, and Ser-215. Positions 224–234 (TEQIRATTPPN) are enriched in polar residues. Residues Thr-230 and Thr-231 each carry the phosphothreonine modification. Ser-240 carries the phosphoserine modification. Tyr-243 is subject to Phosphotyrosine. WW domains follow at residues 265–298 (IQIN…PPRW) and 358–391 (DYTN…LPKY). A disordered region spans residues 293–317 (WKPPRWTRDASISKGDFQSPGDQEL). Disordered stretches follow at residues 428 to 466 (DTND…DQEK) and 591 to 625 (PDSP…SEQK). The span at 445–461 (NESSPSSPKHQDTASSP) shows a compositional bias: polar residues. The PH domain maps to 463-575 (DQEKYGLLNV…WFKVLSSTIN (113 aa)). Residue Ser-593 is modified to Phosphoserine. Residues 595-610 (GIEKHDKEKEQKDPKK) show a composition bias toward basic and acidic residues. In terms of domain architecture, Rho-GAP spans 657–845 (SNLANLCQRE…LILLELSSIF (189 aa)).

In terms of biological role, GTPase activator for the Rho-type GTPases by converting them to an inactive GDP-bound state. This chain is Rho GTPase-activating protein 12 (ARHGAP12), found in Macaca fascicularis (Crab-eating macaque).